The following is a 704-amino-acid chain: DNA ligase (704 aa).

Residues 58–62, 107–108, and E138 contribute to the NAD(+) site; these read DYEYD and SL. The active-site N6-AMP-lysine intermediate is K140. R161, E199, K323, and K347 together coordinate NAD(+). Zn(2+) is bound by residues C441, C444, C459, and C464. The BRCT domain maps to 621–704; that stretch reads EKKGKLAGLN…LKLIGGENTE (84 aa).

It belongs to the NAD-dependent DNA ligase family. LigA subfamily. It depends on Mg(2+) as a cofactor. The cofactor is Mn(2+).

The catalysed reaction is NAD(+) + (deoxyribonucleotide)n-3'-hydroxyl + 5'-phospho-(deoxyribonucleotide)m = (deoxyribonucleotide)n+m + AMP + beta-nicotinamide D-nucleotide.. DNA ligase that catalyzes the formation of phosphodiester linkages between 5'-phosphoryl and 3'-hydroxyl groups in double-stranded DNA using NAD as a coenzyme and as the energy source for the reaction. It is essential for DNA replication and repair of damaged DNA. In Sulfurihydrogenibium sp. (strain YO3AOP1), this protein is DNA ligase.